The following is a 495-amino-acid chain: YTH domain-containing protein ECT3 (495 aa).

A YTH domain is found at 261-398 (AKFYVIKSYS…EQGIKVIKIF (138 aa)). RNA contacts are provided by residues 267-269 (KSY), Asp-273, 283-284 (WS), Asn-316, Trp-340, Trp-345, and Trp-353.

Expressed in the shoot apex, at the sites of leaf formation, and in emerging leaves.

The protein localises to the cytoplasm. Its function is as follows. Specifically recognizes and binds N6-methyladenosine (m6A)-containing RNAs, and regulates mRNA stability. M6A is a modification present at internal sites of mRNAs and some non-coding RNAs and plays a role in mRNA stability and processing. Required for the correct timing of leaf formation and normal leaf morphology. Required for proper trichome branching and morphology. Functions redundantly with ECT2. The polypeptide is YTH domain-containing protein ECT3 (Arabidopsis thaliana (Mouse-ear cress)).